Consider the following 208-residue polypeptide: MARNINPKCRQCRREGEKLFLKGDKCFSDKCPIERRNYPPGQHGQRKTRLSDYAVQLREKQKIRRIYGLLENQFRNVYKRADRQKGITGENLLKLLESRLDNVAYNMGFGASRAEARQIIRHDCILLNGKKANIPSQLIGPGDQIEVAEHAKSYLRIKSSIELAKRRSIPSWLEVDFDNLKGLYKNKPDRSDLSSTINESLVVELYSK.

In terms of domain architecture, S4 RNA-binding spans 98-160 (SRLDNVAYNM…AKSYLRIKSS (63 aa)).

This sequence belongs to the universal ribosomal protein uS4 family. As to quaternary structure, part of the 30S ribosomal subunit. Contacts protein S5. The interaction surface between S4 and S5 is involved in control of translational fidelity.

One of the primary rRNA binding proteins, it binds directly to 16S rRNA where it nucleates assembly of the body of the 30S subunit. Its function is as follows. With S5 and S12 plays an important role in translational accuracy. The sequence is that of Small ribosomal subunit protein uS4 from Nitrosomonas eutropha (strain DSM 101675 / C91 / Nm57).